Reading from the N-terminus, the 469-residue chain is Citrate synthase, mitochondrial (469 aa).

A mitochondrion-targeting transit peptide spans 1-30 (MSFLSVSRLAPKLLNSKNATYFLVAARNAS). Active-site residues include His304 and His350. Arg359 lines the oxaloacetate pocket. The active site involves Asp405. Residues Arg431 and Arg451 each contribute to the oxaloacetate site.

This sequence belongs to the citrate synthase family. As to quaternary structure, homodimer.

It localises to the mitochondrion matrix. It carries out the reaction oxaloacetate + acetyl-CoA + H2O = citrate + CoA + H(+). It functions in the pathway carbohydrate metabolism; tricarboxylic acid cycle; isocitrate from oxaloacetate: step 1/2. Functionally, key enzyme of the Krebs tricarboxylic acid cycle which catalyzes the synthesis of citrate from acetyl coenzyme A and oxaloacetate. This chain is Citrate synthase, mitochondrial (cs), found in Katsuwonus pelamis (Skipjack tuna).